Reading from the N-terminus, the 355-residue chain is Peptide chain release factor 1 (355 aa).

Gln231 is subject to N5-methylglutamine.

The protein belongs to the prokaryotic/mitochondrial release factor family. Post-translationally, methylated by PrmC. Methylation increases the termination efficiency of RF1.

It localises to the cytoplasm. In terms of biological role, peptide chain release factor 1 directs the termination of translation in response to the peptide chain termination codons UAG and UAA. The chain is Peptide chain release factor 1 from Wolinella succinogenes (strain ATCC 29543 / DSM 1740 / CCUG 13145 / JCM 31913 / LMG 7466 / NCTC 11488 / FDC 602W) (Vibrio succinogenes).